A 61-amino-acid polypeptide reads, in one-letter code: [Thr6, Val10, Asp11]-phyllokinin (61 aa).

The N-terminal stretch at 1–22 is a signal peptide; that stretch reads MSFLKKSLFLVLFLGLVSFSIC. A propeptide spanning residues 23–50 is cleaved from the precursor; that stretch reads EEEKRETEEEENEDEMNEESEEKRESPE. Residues 24 to 61 are disordered; that stretch reads EEKRETEEEENEDEMNEESEEKRESPERPPGFTPFRVD. The span at 30 to 42 shows a compositional bias: acidic residues; that stretch reads EEEENEDEMNEES.

The protein belongs to the frog skin active peptide (FSAP) family. Bradykinin-related peptide subfamily. As to expression, expressed by the skin glands.

The protein localises to the secreted. Functionally, induces relaxation of rat smooth muscle from tail artery and contraction of that from ileum, urinary bladder and uterus. Binds to both bradykinin receptor B1 (BDKRB1) and B2 (BDKRB2). This is [Thr6, Val10, Asp11]-phyllokinin from Agalychnis spurrelli (Gliding leaf frog).